Here is a 333-residue protein sequence, read N- to C-terminus: Anthranilate phosphoribosyltransferase (333 aa).

5-phospho-alpha-D-ribose 1-diphosphate-binding positions include glycine 81, 84–85, threonine 89, 91–94, 109–117, and alanine 121; these read GD, NIST, and KHGNRSVSS. Glycine 81 contacts anthranilate. Serine 93 lines the Mg(2+) pocket. Residue asparagine 112 participates in anthranilate binding. Arginine 167 provides a ligand contact to anthranilate. Mg(2+) is bound by residues aspartate 225 and glutamate 226.

Belongs to the anthranilate phosphoribosyltransferase family. In terms of assembly, homodimer. It depends on Mg(2+) as a cofactor.

The catalysed reaction is N-(5-phospho-beta-D-ribosyl)anthranilate + diphosphate = 5-phospho-alpha-D-ribose 1-diphosphate + anthranilate. It functions in the pathway amino-acid biosynthesis; L-tryptophan biosynthesis; L-tryptophan from chorismate: step 2/5. Catalyzes the transfer of the phosphoribosyl group of 5-phosphorylribose-1-pyrophosphate (PRPP) to anthranilate to yield N-(5'-phosphoribosyl)-anthranilate (PRA). The polypeptide is Anthranilate phosphoribosyltransferase (Haemophilus influenzae (strain PittGG)).